Here is a 249-residue protein sequence, read N- to C-terminus: MAGHSKWANIQHRKNAQDAKRGKLFTKLIKEITVAARMGGSDLNSNPRLRLAVDKALDANMTKDTVERAIKRGAGELEGVNYEEIRYEGYGPGGVAIMVDTMTDNRNRTVAEVRHAFTKCGGNLGTDGSVAYLFEKQGVLSYPAGSDEDRIMEVALEAGAEDVAVGDDGSIEVITNPDDYEAVRAAMTEAGLKPEHNEVTMRAGTAAPVDVESAPSLLKLLDMLDDLDDVQNVYTNADFPDEVMQALEA.

This sequence belongs to the TACO1 family.

It is found in the cytoplasm. This is Probable transcriptional regulatory protein Tgr7_2237 from Thioalkalivibrio sulfidiphilus (strain HL-EbGR7).